The following is a 541-amino-acid chain: Peptidyl-alpha-hydroxyglycine alpha-amidating lyase 1 (541 aa).

The first 33 residues, 1–33 (MKSTDSAKCLGSKSLAICCLLLHLLLCIRPAVS), serve as a signal peptide directing secretion. The Extracellular segment spans residues 34–458 (QTQSPQRYLH…VAVHHPSGKA (425 aa)). N-linked (GlcNAc...) asparagine glycosylation is present at N92. NHL repeat units follow at residues 164–205 (GKVQ…FPPR), 215–258 (LGDA…YSRK), and 272–314 (GISY…FLSS). 2 disulfides stabilise this stretch: C228–C248 and C299–C310. A glycan (N-linked (GlcNAc...) asparagine) is linked at N315. Residues 374–418 (KQLVSKFGPNNLQFQNPHDVAVTADGNEIYVAELNPMRIHKFVHR) form an NHL 4 repeat. The helical transmembrane segment at 459–479 (ILVASLMLLFAGSTFALALIF) threads the bilayer. Residues 480 to 541 (ARRRKRGCLP…TKTLASAQYA (62 aa)) lie on the Cytoplasmic side of the membrane. The disordered stretch occupies residues 521–541 (LDQQASDEEQETKTLASAQYA).

The protein belongs to the peptidyl-alpha-hydroxyglycine alpha-amidating lyase family. Zn(2+) serves as cofactor. Post-translationally, N-glycosylated. In terms of tissue distribution, widely expressed. In mature larvae, it is ubiquitously expressed with a low expression in all cells and a stronger expression in a subset of neurons. Colocalizes with neuropeptide proctolin. In adults, weak expression is observed in most neuronal cell bodies and in scattered large cells throughout the protocerebrum and also in the subesophageal neuromeres (at protein level).

Its subcellular location is the cell membrane. The enzyme catalyses a [peptide]-C-terminal (2S)-2-hydroxyglycine = a [peptide]-C-terminal amide + glyoxylate. Peptidyl-alpha-hydroxylglycine alpha-amidating lyase that catalyzes an essential reaction in C-terminal alpha-amidation of peptides. Mediates the dismutation of the unstable peptidyl(2-hydroxyglycine) intermediate to glyoxylate and the corresponding desglycine peptide amide. C-terminal amidation of peptides such as neuropeptides is essential for full biological activity. The polypeptide is Peptidyl-alpha-hydroxyglycine alpha-amidating lyase 1 (Pal1) (Drosophila melanogaster (Fruit fly)).